We begin with the raw amino-acid sequence, 387 residues long: Galanin receptor type 2 (387 aa).

Residues 1-28 (MNVSGCPGAGNASQAGGGGGWHPEAVIV) lie on the Extracellular side of the membrane. 2 N-linked (GlcNAc...) asparagine glycosylation sites follow: asparagine 2 and asparagine 11. A helical transmembrane segment spans residues 29–49 (PLLFALIFLVGTVGNTLVLAV). Residues 50–60 (LLRGGQAVSTT) are Cytoplasmic-facing. The chain crosses the membrane as a helical span at residues 61–81 (NLFILNLGVADLCFILCCVPF). Over 82-99 (QATIYTLDGWVFGSLLCK) the chain is Extracellular. Cysteine 98 and cysteine 175 are oxidised to a cystine. The helical transmembrane segment at 100–121 (AVHFLIFLTMHASSFTLAAVSL) threads the bilayer. At 122–141 (DRYLAIRYPLHSRELRTPRN) the chain is on the cytoplasmic side. The helical transmembrane segment at 142–162 (ALAAIGLIWGLSLLFSGPYLS) threads the bilayer. Over 163–187 (YYRQSQLANLTVCHPAWSAPRRRAM) the chain is Extracellular. A helical transmembrane segment spans residues 188–208 (DICTFVFSYLLPVLVLGLTYA). Topologically, residues 209 to 237 (RTLRYLWRAVDPVAAGSGARRAKRKVTRM) are cytoplasmic. A helical transmembrane segment spans residues 238–258 (ILIVAALFCLCWMPHHALILC). Residues 259–260 (VW) are Extracellular-facing. A helical membrane pass occupies residues 261-281 (FGQFPLTRATYALRILSHLVS). The Cytoplasmic portion of the chain corresponds to 282-387 (YANSCVNPIV…GDSILTVDVA (106 aa)).

This sequence belongs to the G-protein coupled receptor 1 family. Expressed abundantly within the central nervous system in both hypothalamus and hippocampus. In peripheral tissues, the strongest expression was observed in heart, kidney, liver, and small intestine.

It localises to the cell membrane. In terms of biological role, receptor for the hormone galanin and GALP. Receptor for the hormone spexin-1. The activity of this receptor is mediated by G proteins that activate the phospholipase C/protein kinase C pathway (via G(q)) and that inhibit adenylyl cyclase (via G(i)). The polypeptide is Galanin receptor type 2 (GALR2) (Homo sapiens (Human)).